Consider the following 477-residue polypeptide: Cysteine protease ATG4b (477 aa).

The segment at 11-39 (SKCSSSSTSEKRDISSPTSLVSDSASSDN) is disordered. The segment covering 25 to 39 (SSPTSLVSDSASSDN) has biased composition (polar residues). The active-site Nucleophile is the cysteine 173. Active-site residues include aspartate 368 and histidine 370. The interval 453-477 (AETSSSTETSTEISGEEHEDDWQLL) is disordered. The segment covering 454-465 (ETSSSTETSTEI) has biased composition (low complexity).

This sequence belongs to the peptidase C54 family. In terms of assembly, interacts with ATG8a and ATG8d. As to expression, constitutively expressed.

It is found in the cytoplasm. It carries out the reaction [protein]-C-terminal L-amino acid-glycyl-phosphatidylethanolamide + H2O = [protein]-C-terminal L-amino acid-glycine + a 1,2-diacyl-sn-glycero-3-phosphoethanolamine. Cysteine protease that plays a key role in autophagy by mediating both proteolytic activation and delipidation of ATG8 family proteins. The protease activity is required for proteolytic activation of ATG8 family proteins: cleaves the C-terminal amino acid of ATG8 proteins to reveal a C-terminal glycine. Exposure of the glycine at the C-terminus is essential for ATG8 proteins conjugation to phosphatidylethanolamine (PE) and insertion to membranes, which is necessary for autophagy. In addition to the protease activity, also mediates delipidation of PE-conjugated ATG8 proteins. The chain is Cysteine protease ATG4b from Arabidopsis thaliana (Mouse-ear cress).